Reading from the N-terminus, the 23-residue chain is Acidic phospholipase CHA-E6a (23 aa).

Belongs to the phospholipase A2 family. Group II subfamily. D49 sub-subfamily. Ca(2+) is required as a cofactor. In terms of processing, contains 7 disulfide bonds. As to expression, expressed by the venom gland.

Its subcellular location is the secreted. The enzyme catalyses a 1,2-diacyl-sn-glycero-3-phosphocholine + H2O = a 1-acyl-sn-glycero-3-phosphocholine + a fatty acid + H(+). Its function is as follows. Snake venom phospholipase A2 (PLA2) that shows high lipolytic (1048 umol/mg/min) and weak ADP-induced platelet aggregation activities. Also shows weak anticoagulant activity (IC(50) is less than 1.0 uM). PLA2 catalyzes the calcium-dependent hydrolysis of the 2-acyl groups in 3-sn-phosphoglycerides. The polypeptide is Acidic phospholipase CHA-E6a (Crotalus horridus (Timber rattlesnake)).